Consider the following 358-residue polypeptide: Chondroadherin (358 aa).

A signal peptide spans Met-1–Ala-20. The 30-residue stretch at Ala-21 to Glu-50 folds into the LRRNT domain. Cys-22 and Cys-37 are oxidised to a cystine. LRR repeat units follow at residues Thr-51–Thr-72, Asn-75–Gly-96, Gln-99–Asp-120, Glu-123–Pro-144, Asn-147–Gly-168, Asp-171–Asp-192, Asn-195–Lys-216, Val-219–Ser-240, Tyr-244–Gly-265, and Thr-268–Asp-289. O-linked (GalNAc...) serine glycosylation is present at Ser-143. The region spanning Asn-299 to Ser-347 is the LRRCT domain. Cystine bridges form between Cys-303/Cys-345 and Cys-305/Cys-325. The tract at residues Pro-321 to His-358 is disordered. A compositionally biased stretch (basic residues) spans Pro-348–His-358.

The protein belongs to the small leucine-rich proteoglycan (SLRP) family. SLRP class IV subfamily. As to quaternary structure, mostly monomeric. In terms of tissue distribution, present in femoral head and rib cartilage, as well as in tendon. Detected in bone marrow.

The protein resides in the secreted. It localises to the extracellular space. The protein localises to the extracellular matrix. Its function is as follows. Promotes attachment of chondrocytes, fibroblasts, and osteoblasts. This binding is mediated (at least for chondrocytes and fibroblasts) by the integrin alpha(2)beta(1). May play an important role in the regulation of chondrocyte growth and proliferation. The chain is Chondroadherin (Chad) from Rattus norvegicus (Rat).